Reading from the N-terminus, the 566-residue chain is Proline--tRNA ligase (566 aa).

The protein belongs to the class-II aminoacyl-tRNA synthetase family. ProS type 1 subfamily. Homodimer.

Its subcellular location is the cytoplasm. It catalyses the reaction tRNA(Pro) + L-proline + ATP = L-prolyl-tRNA(Pro) + AMP + diphosphate. Catalyzes the attachment of proline to tRNA(Pro) in a two-step reaction: proline is first activated by ATP to form Pro-AMP and then transferred to the acceptor end of tRNA(Pro). As ProRS can inadvertently accommodate and process non-cognate amino acids such as alanine and cysteine, to avoid such errors it has two additional distinct editing activities against alanine. One activity is designated as 'pretransfer' editing and involves the tRNA(Pro)-independent hydrolysis of activated Ala-AMP. The other activity is designated 'posttransfer' editing and involves deacylation of mischarged Ala-tRNA(Pro). The misacylated Cys-tRNA(Pro) is not edited by ProRS. This is Proline--tRNA ligase from Bacillus cereus (strain B4264).